The primary structure comprises 375 residues: MLNFKLLNTDGNARRGQLTVNHGVIETPIFMPVGTYGSVKAMSPLELKEIDAQIILGNTFHLWLRPGNDIVAKFGGLHEFMGWDKPILTDSGGFQVFSLGEMRKITEEGVHFSSPINGDKLFLSPEVSMQIQRVLNSDIVMQFDECTPYEIDGRPATADEAAKSMRMSLRWAKRSIDEFNREENPNALFGIVQGGMFEHLRDESLAGLEDINFHGVAIGGLSVGEPKEDMLRVLQHVGPRLPANKPHYLMGVGTPEDLVQGVANGIDMFDCVMPTRNARNGWLFTRFGDIKIKNARYKDDKKPLDASCGCYACRNFSRAYLHHLHRTGEILGARLNTIHNLHYYLDLMREMREAISEGRFQLFVKQFHADRARGA.

Catalysis depends on Asp90, which acts as the Proton acceptor. Substrate-binding positions include 90-94, Asp144, Gln193, and Gly220; that span reads DSGGF. The tract at residues 251 to 257 is RNA binding; sequence GVGTPED. The active-site Nucleophile is Asp270. Positions 275–279 are RNA binding; important for wobble base 34 recognition; sequence TRNAR. Residues Cys308, Cys310, Cys313, and His339 each coordinate Zn(2+).

Belongs to the queuine tRNA-ribosyltransferase family. As to quaternary structure, homodimer. Within each dimer, one monomer is responsible for RNA recognition and catalysis, while the other monomer binds to the replacement base PreQ1. Requires Zn(2+) as cofactor.

It catalyses the reaction 7-aminomethyl-7-carbaguanine + guanosine(34) in tRNA = 7-aminomethyl-7-carbaguanosine(34) in tRNA + guanine. The protein operates within tRNA modification; tRNA-queuosine biosynthesis. In terms of biological role, catalyzes the base-exchange of a guanine (G) residue with the queuine precursor 7-aminomethyl-7-deazaguanine (PreQ1) at position 34 (anticodon wobble position) in tRNAs with GU(N) anticodons (tRNA-Asp, -Asn, -His and -Tyr). Catalysis occurs through a double-displacement mechanism. The nucleophile active site attacks the C1' of nucleotide 34 to detach the guanine base from the RNA, forming a covalent enzyme-RNA intermediate. The proton acceptor active site deprotonates the incoming PreQ1, allowing a nucleophilic attack on the C1' of the ribose to form the product. After dissociation, two additional enzymatic reactions on the tRNA convert PreQ1 to queuine (Q), resulting in the hypermodified nucleoside queuosine (7-(((4,5-cis-dihydroxy-2-cyclopenten-1-yl)amino)methyl)-7-deazaguanosine). In Herminiimonas arsenicoxydans, this protein is Queuine tRNA-ribosyltransferase.